A 550-amino-acid chain; its full sequence is Arginine--tRNA ligase (550 aa).

The 'HIGH' region signature appears at 130 to 140 (ANPTGPIHIGG).

The protein belongs to the class-I aminoacyl-tRNA synthetase family. Monomer.

It localises to the cytoplasm. It carries out the reaction tRNA(Arg) + L-arginine + ATP = L-arginyl-tRNA(Arg) + AMP + diphosphate. This Mycobacterium tuberculosis (strain CDC 1551 / Oshkosh) protein is Arginine--tRNA ligase (argS).